Here is a 515-residue protein sequence, read N- to C-terminus: Maturase K (515 aa).

It belongs to the intron maturase 2 family. MatK subfamily.

Its subcellular location is the plastid. The protein resides in the chloroplast. Usually encoded in the trnK tRNA gene intron. Probably assists in splicing its own and other chloroplast group II introns. In Picea sitchensis (Sitka spruce), this protein is Maturase K.